A 291-amino-acid polypeptide reads, in one-letter code: uncharacterized protein (291 aa).

10 helical membrane passes run 5-23 (ILLS…YFST), 33-52 (IFGF…VFLF), 69-91 (PLLI…LFLW), 101-120 (VSFG…RLVF), 127-144 (VKFL…SNIL), 148-165 (GLSW…TYFA), 172-194 (INDL…YFAW), 209-228 (LLLL…TYIV), 235-257 (INVL…FLIG), and 262-284 (SETI…EGLV).

This sequence belongs to the EamA transporter family.

The protein resides in the cell membrane. This is an uncharacterized protein from Pasteurella multocida (strain Pm70).